A 406-amino-acid chain; its full sequence is Trk system potassium uptake protein trkA homolog 1 (406 aa).

The 124-residue stretch at 1–124 (MKAVIIGAGE…RAQVGVDLMI (124 aa)) folds into the RCK N-terminal 1 domain. NAD(+) is bound by residues 7–11 (GAGEV), Asp-29, 70–71 (TG), and Arg-101. Residues 144–225 (IDAEMFAEGK…MEDLESVFGS (82 aa)) form the RCK C-terminal domain. The region spanning 230–348 (RTRILLIGCG…FEMVGIDMAV (119 aa)) is the RCK N-terminal 2 domain. Residue 232-262 (RILLIGCGIVGMYLAKLIDKEENADLRIIEH) participates in NAD(+) binding.

Its function is as follows. Part of a potassium transport system. This chain is Trk system potassium uptake protein trkA homolog 1 (trkA1), found in Methanosarcina mazei (Methanosarcina frisia).